A 512-amino-acid polypeptide reads, in one-letter code: Glycerol kinase 1 (512 aa).

Residue T18 coordinates ADP. ATP-binding residues include T18, T19, and S20. T18 lines the sn-glycerol 3-phosphate pocket. R22 contributes to the ADP binding site. R88, E89, Y140, and D255 together coordinate sn-glycerol 3-phosphate. R88, E89, Y140, D255, and Q256 together coordinate glycerol. 2 residues coordinate ADP: T277 and G321. Residues T277, G321, Q325, and G422 each contribute to the ATP site. Positions 422 and 426 each coordinate ADP.

The protein belongs to the FGGY kinase family.

It catalyses the reaction glycerol + ATP = sn-glycerol 3-phosphate + ADP + H(+). It participates in polyol metabolism; glycerol degradation via glycerol kinase pathway; sn-glycerol 3-phosphate from glycerol: step 1/1. With respect to regulation, inhibited by fructose 1,6-bisphosphate (FBP). Functionally, key enzyme in the regulation of glycerol uptake and metabolism. Catalyzes the phosphorylation of glycerol to yield sn-glycerol 3-phosphate. In Streptomyces avermitilis (strain ATCC 31267 / DSM 46492 / JCM 5070 / NBRC 14893 / NCIMB 12804 / NRRL 8165 / MA-4680), this protein is Glycerol kinase 1.